A 141-amino-acid polypeptide reads, in one-letter code: Oleosin 14.9 kDa (141 aa).

The span at 1–22 (MADQTRTHHEMISRDSTQEAHP) shows a compositional bias: basic and acidic residues. A disordered region spans residues 1-24 (MADQTRTHHEMISRDSTQEAHPKA). Residues 1-29 (MADQTRTHHEMISRDSTQEAHPKARQMVK) are polar. The segment at 30–141 (AATAVTAGGS…NIGVQHQQVS (112 aa)) is hydrophobic. Transmembrane regions (helical) follow at residues 38-58 (GSLL…LTVA), 60-80 (PLLV…ALII), and 81-101 (TGFL…SWLY).

The protein belongs to the oleosin family.

The protein resides in the lipid droplet. The protein localises to the membrane. May have a structural role to stabilize the lipid body during desiccation of the seed by preventing coalescence of the oil. Probably interacts with both lipid and phospholipid moieties of lipid bodies. May also provide recognition signals for specific lipase anchorage in lipolysis during seedling growth. The polypeptide is Oleosin 14.9 kDa (OL3) (Arabidopsis thaliana (Mouse-ear cress)).